The following is a 238-amino-acid chain: Orotidine 5'-phosphate decarboxylase (238 aa).

Residues D11, K32, 59–68 (DLKFHDIPNT), T123, R185, Q194, G214, and R215 each bind substrate. K61 acts as the Proton donor in catalysis.

The protein belongs to the OMP decarboxylase family. Type 1 subfamily. Homodimer.

It carries out the reaction orotidine 5'-phosphate + H(+) = UMP + CO2. The protein operates within pyrimidine metabolism; UMP biosynthesis via de novo pathway; UMP from orotate: step 2/2. Catalyzes the decarboxylation of orotidine 5'-monophosphate (OMP) to uridine 5'-monophosphate (UMP). This is Orotidine 5'-phosphate decarboxylase from Nostoc sp. (strain PCC 7120 / SAG 25.82 / UTEX 2576).